The sequence spans 756 residues: Transient receptor potential cation channel subfamily V member 2 (756 aa).

The interval methionine 1–asparagine 45 is disordered. The required for interaction with SLC50A1 stretch occupies residues methionine 1–isoleucine 385. The Cytoplasmic portion of the chain corresponds to methionine 1–arginine 387. A phosphoserine mark is found at serine 15 and serine 77. 6 ANK repeats span residues asparagine 68 to serine 110, threonine 111 to tyrosine 157, arginine 158 to tyrosine 203, phenylalanine 204 to serine 239, leucine 240 to histidine 288, and glutamine 289 to serine 315. Residues phenylalanine 388–histidine 408 traverse the membrane as a helical segment. Over glutamine 409 to methionine 428 the chain is Extracellular. Residues leucine 429–tryptophan 449 traverse the membrane as a helical segment. Topologically, residues tyrosine 450 to arginine 455 are cytoplasmic. Residues leucine 456–leucine 476 traverse the membrane as a helical segment. The Extracellular portion of the chain corresponds to leucine 477–glutamate 490. Residues tryptophan 491–threonine 511 form a helical membrane-spanning segment. Topologically, residues arginine 512–leucine 532 are cytoplasmic. A helical transmembrane segment spans residues leucine 533–leucine 553. The interval serine 559–valine 583 is disordered. An N-linked (GlcNAc...) asparagine glycan is attached at asparagine 567. The segment at residues threonine 568–glutamate 604 is an intramembrane region (pore-forming). The helical transmembrane segment at valine 617–isoleucine 637 threads the bilayer. The Cytoplasmic segment spans residues alanine 638–histidine 756. Residues glutamate 719–histidine 756 form a disordered region. The span at asparagine 732–serine 741 shows a compositional bias: polar residues. A phosphoserine mark is found at serine 743 and serine 755.

The protein belongs to the transient receptor (TC 1.A.4) family. TrpV subfamily. TRPV2 sub-subfamily. Homotetramer. Interacts with a cAMP-dependent protein kinase type II regulatory subunit (PRKAR2A or PRKAR2B) and ACBD3. Interacts with SLC50A1; the interaction probably occurs intracellularly and depends on TRPV2 N-glycosylation. N-glycosylated. Post-translationally, phosphorylated by PKA. In terms of tissue distribution, abundantly expressed in spleen, placenta, skeleton muscle, lung and brain.

It is found in the cell membrane. The protein resides in the cytoplasm. The protein localises to the melanosome. The enzyme catalyses Ca(2+)(in) = Ca(2+)(out). The catalysed reaction is Mg(2+)(in) = Mg(2+)(out). It carries out the reaction Na(+)(in) = Na(+)(out). It catalyses the reaction K(+)(in) = K(+)(out). Calcium-permeable, non-selective cation channel with an outward rectification. Seems to be regulated, at least in part, by IGF1, PDGF and neuropeptide head activator. May transduce physical stimuli in mast cells. Activated by temperatures higher than 52 degrees Celsius; is not activated by vanilloids and acidic pH. This Mus musculus (Mouse) protein is Transient receptor potential cation channel subfamily V member 2 (Trpv2).